The chain runs to 706 residues: Choline transporter-like protein 2 (706 aa).

Over 1–33 (MGDERPHYYGKHGTPQKYDPTFKGPIYNRGCTD) the chain is Cytoplasmic. Thr14 bears the Phosphothreonine mark. The chain crosses the membrane as a helical span at residues 34–54 (IICCVFLLLAIVGYVAVGIIA). At 55 to 232 (WTHGDPRKVI…RIFEDYTVSW (178 aa)) the chain is on the extracellular side. Residues Asn187 and Asn200 are each glycosylated (N-linked (GlcNAc...) asparagine). Residues 233–253 (YWIIIGLVIAMAMSLLFIILL) traverse the membrane as a helical segment. The Cytoplasmic segment spans residues 254-256 (RFL). A helical membrane pass occupies residues 257–277 (AGIMVWVMIIMVILVLGYGIF). Over 278 to 315 (HCYMEYSRLRGEAGSDVSLVDLGFQTDFRVYLHLRQTW) the chain is Extracellular. Residues 316 to 336 (LAFMIILSILEVIIILLLIFL) form a helical membrane-spanning segment. Over 337 to 364 (RKRILIAIALIKEASRAVGYVMCSLLYP) the chain is Cytoplasmic. A helical transmembrane segment spans residues 365–385 (LVTFFLLCLCIAYWASTAVFL). Over 386-457 (STSNEAVYKI…FNAFMFFWLA (72 aa)) the chain is Extracellular. The N-linked (GlcNAc...) asparagine glycan is linked to Asn417. The chain crosses the membrane as a helical span at residues 458-480 (NFVLALGQVTLAGAFASYYWALR). The Cytoplasmic segment spans residues 481–504 (KPDDLPAFPLFSAFGRALRYHTGS). A helical transmembrane segment spans residues 505-525 (LAFGALILAIVQIIRVILEYL). Residues 526 to 563 (DQRLKAAENKFAKCLMTCLKCCFWCLEKFIKFLNRNAY) are Extracellular-facing. Residues 564–584 (IMIAIYGTNFCTSARNAFFLL) form a helical membrane-spanning segment. The Cytoplasmic portion of the chain corresponds to 585–599 (MRNIIRVAVLDKVTD). The helical transmembrane segment at 600–620 (FLFLLGKLLIVGSVGILAFFF) threads the bilayer. Residues 621-638 (FTHRIRIVQDTAPPLNYY) are Extracellular-facing. The chain crosses the membrane as a helical span at residues 639–659 (WVPILTVIVGSYLIAHGFFSV). The Cytoplasmic segment spans residues 660 to 706 (YGMCVDTLFLCFLEDLERNDGSAERPYFMSSTLKKLLNKTNKKAAES).

This sequence belongs to the CTL (choline transporter-like) family. As to quaternary structure, interacts with COCH. Present in supporting cells of the inner ear (at protein level). As to expression, expressed in inner ear vestibular tissue.

It is found in the cell membrane. It localises to the mitochondrion outer membrane. It carries out the reaction choline(out) + n H(+)(in) = choline(in) + n H(+)(out). The catalysed reaction is ethanolamine(out) + n H(+)(in) = ethanolamine(in) + n H(+)(out). In terms of biological role, choline/H+ antiporter, mainly in mitochodria. Also acts as a low-affinity ethanolamine/H+ antiporter, regulating the supply of extracellular ethanolamine (Etn) for the CDP-Etn pathway, redistribute intracellular Etn and balance the CDP-Cho and CDP-Etn arms of the Kennedy pathway. Its function is as follows. Does not exhibit choline transporter activity. This chain is Choline transporter-like protein 2, found in Homo sapiens (Human).